Reading from the N-terminus, the 350-residue chain is DNA polymerase IV (350 aa).

A UmuC domain is found at 7-188 (IIHIDMDYFF…LPVKKLFGVG (182 aa)). Mg(2+)-binding residues include D11 and D106. E107 is a catalytic residue.

Belongs to the DNA polymerase type-Y family. In terms of assembly, monomer. Requires Mg(2+) as cofactor.

Its subcellular location is the cytoplasm. The enzyme catalyses DNA(n) + a 2'-deoxyribonucleoside 5'-triphosphate = DNA(n+1) + diphosphate. Functionally, poorly processive, error-prone DNA polymerase involved in untargeted mutagenesis. Copies undamaged DNA at stalled replication forks, which arise in vivo from mismatched or misaligned primer ends. These misaligned primers can be extended by PolIV. Exhibits no 3'-5' exonuclease (proofreading) activity. May be involved in translesional synthesis, in conjunction with the beta clamp from PolIII. The sequence is that of DNA polymerase IV from Francisella philomiragia subsp. philomiragia (strain ATCC 25017 / CCUG 19701 / FSC 153 / O#319-036).